The chain runs to 230 residues: Phosphoribosylaminoimidazole-succinocarboxamide synthase (230 aa).

Belongs to the SAICAR synthetase family.

It carries out the reaction 5-amino-1-(5-phospho-D-ribosyl)imidazole-4-carboxylate + L-aspartate + ATP = (2S)-2-[5-amino-1-(5-phospho-beta-D-ribosyl)imidazole-4-carboxamido]succinate + ADP + phosphate + 2 H(+). It functions in the pathway purine metabolism; IMP biosynthesis via de novo pathway; 5-amino-1-(5-phospho-D-ribosyl)imidazole-4-carboxamide from 5-amino-1-(5-phospho-D-ribosyl)imidazole-4-carboxylate: step 1/2. The sequence is that of Phosphoribosylaminoimidazole-succinocarboxamide synthase from Thermotoga sp. (strain RQ2).